Here is a 74-residue protein sequence, read N- to C-terminus: Sec-independent protein translocase protein TatA (74 aa).

The chain crosses the membrane as a helical span at residues 1-21; that stretch reads MGGISIWQLLIIVAIIVLLFG. A disordered region spans residues 51 to 74; that stretch reads ANFDKVEAKESTSTTEKTKEKEQA.

This sequence belongs to the TatA/E family. In terms of assembly, the Tat system comprises two distinct complexes: a TatABC complex, containing multiple copies of TatA, TatB and TatC subunits, and a separate TatA complex, containing only TatA subunits. Substrates initially bind to the TatABC complex, which probably triggers association of the separate TatA complex to form the active translocon.

It localises to the cell inner membrane. Part of the twin-arginine translocation (Tat) system that transports large folded proteins containing a characteristic twin-arginine motif in their signal peptide across membranes. TatA could form the protein-conducting channel of the Tat system. This chain is Sec-independent protein translocase protein TatA, found in Haemophilus ducreyi (strain 35000HP / ATCC 700724).